We begin with the raw amino-acid sequence, 470 residues long: Ribulose bisphosphate carboxylase large chain (470 aa).

Asn118 and Thr168 together coordinate substrate. Residue Lys170 is the Proton acceptor of the active site. Residue Lys172 participates in substrate binding. Residues Lys196, Asp198, and Glu199 each contribute to the Mg(2+) site. Lys196 bears the N6-carboxylysine mark. The active-site Proton acceptor is His289. Substrate contacts are provided by Arg290, His322, and Ser374. An Interacts with RbcX2 motif is present at residues 459–465 (EIKFEFD).

It belongs to the RuBisCO large chain family. Type I subfamily. As to quaternary structure, heterohexadecamer of 8 large chains and 8 small chains; disulfide-linked. The disulfide link is formed within the large subunit homodimers. Mg(2+) serves as cofactor. Post-translationally, the disulfide bond which can form in the large chain dimeric partners within the hexadecamer appears to be associated with oxidative stress and protein turnover.

It localises to the carboxysome. The catalysed reaction is 2 (2R)-3-phosphoglycerate + 2 H(+) = D-ribulose 1,5-bisphosphate + CO2 + H2O. It carries out the reaction D-ribulose 1,5-bisphosphate + O2 = 2-phosphoglycolate + (2R)-3-phosphoglycerate + 2 H(+). In terms of biological role, ruBisCO catalyzes two reactions: the carboxylation of D-ribulose 1,5-bisphosphate, the primary event in carbon dioxide fixation, as well as the oxidative fragmentation of the pentose substrate in the photorespiration process. Both reactions occur simultaneously and in competition at the same active site. In Picosynechococcus sp. (strain ATCC 27264 / PCC 7002 / PR-6) (Agmenellum quadruplicatum), this protein is Ribulose bisphosphate carboxylase large chain.